Here is a 91-residue protein sequence, read N- to C-terminus: Small ribosomal subunit protein uS19 (91 aa).

The disordered stretch occupies residues 72–91 (GEFSPTRTYTGHGSEKGKKK).

It belongs to the universal ribosomal protein uS19 family.

Functionally, protein S19 forms a complex with S13 that binds strongly to the 16S ribosomal RNA. The protein is Small ribosomal subunit protein uS19 of Mycoplasma mobile (strain ATCC 43663 / 163K / NCTC 11711) (Mesomycoplasma mobile).